The chain runs to 437 residues: Type II methyltransferase M.HgiBI (437 aa).

Residues 4 to 431 (FRFIDLFAGI…KALQCVKLFE (428 aa)) enclose the SAM-dependent MTase C5-type domain. Residue Cys-75 is part of the active site.

Belongs to the class I-like SAM-binding methyltransferase superfamily. C5-methyltransferase family.

It catalyses the reaction a 2'-deoxycytidine in DNA + S-adenosyl-L-methionine = a 5-methyl-2'-deoxycytidine in DNA + S-adenosyl-L-homocysteine + H(+). Functionally, a methylase that recognizes the double-stranded sequence 5'-GGWCC-3', methylates C-? on both strands, and protects the DNA from cleavage by the HgiBI endonuclease. This system is less active than isoschizomeric RM.HgiEI. This chain is Type II methyltransferase M.HgiBI, found in Herpetosiphon aurantiacus (Herpetosiphon giganteus).